The primary structure comprises 90 residues: Exodeoxyribonuclease 7 small subunit (90 aa).

Residues 62–90 (QDGQANPMSSQGHTAGEYPDDEAEEAEEA) form a disordered region. Over residues 64 to 74 (GQANPMSSQGH) the composition is skewed to polar residues. Positions 79-90 (YPDDEAEEAEEA) are enriched in acidic residues.

It belongs to the XseB family. As to quaternary structure, heterooligomer composed of large and small subunits.

It localises to the cytoplasm. The enzyme catalyses Exonucleolytic cleavage in either 5'- to 3'- or 3'- to 5'-direction to yield nucleoside 5'-phosphates.. Its function is as follows. Bidirectionally degrades single-stranded DNA into large acid-insoluble oligonucleotides, which are then degraded further into small acid-soluble oligonucleotides. The polypeptide is Exodeoxyribonuclease 7 small subunit (Desulfovibrio desulfuricans (strain ATCC 27774 / DSM 6949 / MB)).